Here is a 387-residue protein sequence, read N- to C-terminus: 3-ketoacyl-CoA thiolase (387 aa).

The active-site Acyl-thioester intermediate is the Cys-91. Active-site proton acceptor residues include His-343 and Cys-373.

The protein belongs to the thiolase-like superfamily. Thiolase family. As to quaternary structure, heterotetramer of two alpha chains (FadB) and two beta chains (FadA).

It is found in the cytoplasm. The enzyme catalyses an acyl-CoA + acetyl-CoA = a 3-oxoacyl-CoA + CoA. The protein operates within lipid metabolism; fatty acid beta-oxidation. Functionally, catalyzes the final step of fatty acid oxidation in which acetyl-CoA is released and the CoA ester of a fatty acid two carbons shorter is formed. This Shewanella loihica (strain ATCC BAA-1088 / PV-4) protein is 3-ketoacyl-CoA thiolase.